The chain runs to 259 residues: Dihydroorotate dehydrogenase B (NAD(+)), electron transfer subunit (259 aa).

Positions 2-102 (MQKQNMIVVN…LGPLGHGFPV (101 aa)) constitute an FAD-binding FR-type domain. Residues 53–56 (RPIS), 70–72 (LYR), and 77–78 (GT) each bind FAD. Residues Cys221, Cys226, Cys229, and Cys246 each contribute to the [2Fe-2S] cluster site.

The protein belongs to the PyrK family. As to quaternary structure, heterotetramer of 2 PyrK and 2 PyrD type B subunits. The cofactor is [2Fe-2S] cluster. Requires FAD as cofactor.

The protein operates within pyrimidine metabolism; UMP biosynthesis via de novo pathway; orotate from (S)-dihydroorotate (NAD(+) route): step 1/1. Functionally, responsible for channeling the electrons from the oxidation of dihydroorotate from the FMN redox center in the PyrD type B subunit to the ultimate electron acceptor NAD(+). In Bacillus cereus (strain ATCC 14579 / DSM 31 / CCUG 7414 / JCM 2152 / NBRC 15305 / NCIMB 9373 / NCTC 2599 / NRRL B-3711), this protein is Dihydroorotate dehydrogenase B (NAD(+)), electron transfer subunit.